The sequence spans 560 residues: Bifunctional NAD(P)H-hydrate repair enzyme (560 aa).

The segment at 1-241 (MLSRLSERCS…WMTAPERMRA (241 aa)) is NAD(P)H-hydrate epimerase. In terms of domain architecture, YjeF N-terminal spans 29-235 (LRDAEPAAAA…SLGLEDWMTA (207 aa)). Residues 77–81 (NNGGD) are NADPHX 1; for epimerase activity. Residues asparagine 78 and aspartate 145 each coordinate K(+). An NADPHX 1; for epimerase activity region spans residues 149–155 (GTGICGP). (6S)-NADPHX is bound by residues tyrosine 160 and aspartate 178. Position 181 (serine 181) interacts with K(+). Residues 249 to 547 (LDDVYEYFGI…HRVPLIVNAS (299 aa)) form the YjeF C-terminal domain. The ADP-dependent (S)-NAD(P)H-hydrate dehydratase stretch occupies residues 249 to 560 (LDDVYEYFGI…PATRQRSSGP (312 aa)). Glycine 351 lines the (6S)-NADPHX pocket. Residues 417–423 (HPGEAAR) form an NADPHX 2; for dehydratase activity region. Residues 454-458 (KGPGT) and 475-484 (NAGMASGGMG) each bind ADP. Aspartate 485 is a binding site for (6S)-NADPHX.

It in the N-terminal section; belongs to the NnrE/AIBP family. This sequence in the C-terminal section; belongs to the NnrD/CARKD family. It depends on K(+) as a cofactor.

It carries out the reaction (6S)-NADHX + ADP = AMP + phosphate + NADH + H(+). It catalyses the reaction (6S)-NADPHX + ADP = AMP + phosphate + NADPH + H(+). The catalysed reaction is (6R)-NADHX = (6S)-NADHX. The enzyme catalyses (6R)-NADPHX = (6S)-NADPHX. Bifunctional enzyme that catalyzes the epimerization of the S- and R-forms of NAD(P)HX and the dehydration of the S-form of NAD(P)HX at the expense of ADP, which is converted to AMP. This allows the repair of both epimers of NAD(P)HX, a damaged form of NAD(P)H that is a result of enzymatic or heat-dependent hydration. This Leishmania infantum protein is Bifunctional NAD(P)H-hydrate repair enzyme.